The chain runs to 411 residues: Argininosuccinate lyase (411 aa).

Belongs to the lyase 1 family. Argininosuccinate lyase subfamily.

The protein localises to the cytoplasm. It carries out the reaction 2-(N(omega)-L-arginino)succinate = fumarate + L-arginine. It functions in the pathway amino-acid biosynthesis; L-arginine biosynthesis; L-arginine from L-ornithine and carbamoyl phosphate: step 3/3. This is Argininosuccinate lyase from Legionella pneumophila subsp. pneumophila (strain Philadelphia 1 / ATCC 33152 / DSM 7513).